Reading from the N-terminus, the 364-residue chain is Glycine oxidase (364 aa).

FAD-binding positions include 12–13, 32–33, 40–41, 45–47, and Val-173; these read VI, ER, AS, and GGI. Arg-302 is a substrate binding site. An FAD-binding site is contributed by 327 to 333; sequence HYRNGLV.

This sequence belongs to the DAO family. ThiO subfamily. Monomer. It depends on FAD as a cofactor.

The catalysed reaction is glycine + O2 + H2O = glyoxylate + H2O2 + NH4(+). It catalyses the reaction sarcosine + O2 + H2O = methylamine + glyoxylate + H2O2. Its pathway is cofactor biosynthesis; thiamine diphosphate biosynthesis. Catalyzes the oxidation of glycine, leading to glyoxyl imine and hydrogen peroxide as primary products; glyoxyl imine is used for the biosynthesis of the thiazole ring of thiamine. Otherwise, glyoxyl imine is spontaneously hydrolyzed in water to produce glyoxylate and ammonia. Can also use sarcosine (N-methylglycine) as substrate. In Pseudomonas aeruginosa (strain ATCC 15692 / DSM 22644 / CIP 104116 / JCM 14847 / LMG 12228 / 1C / PRS 101 / PAO1), this protein is Glycine oxidase.